Reading from the N-terminus, the 280-residue chain is Bifunctional protein FolD (280 aa).

NADP(+) is bound by residues 164–166 (GRS), Ser-189, and Val-230.

This sequence belongs to the tetrahydrofolate dehydrogenase/cyclohydrolase family. Homodimer.

The enzyme catalyses (6R)-5,10-methylene-5,6,7,8-tetrahydrofolate + NADP(+) = (6R)-5,10-methenyltetrahydrofolate + NADPH. The catalysed reaction is (6R)-5,10-methenyltetrahydrofolate + H2O = (6R)-10-formyltetrahydrofolate + H(+). It participates in one-carbon metabolism; tetrahydrofolate interconversion. Functionally, catalyzes the oxidation of 5,10-methylenetetrahydrofolate to 5,10-methenyltetrahydrofolate and then the hydrolysis of 5,10-methenyltetrahydrofolate to 10-formyltetrahydrofolate. The sequence is that of Bifunctional protein FolD from Geotalea daltonii (strain DSM 22248 / JCM 15807 / FRC-32) (Geobacter daltonii).